The chain runs to 204 residues: Tumor protein D53 (204 aa).

The segment at 1–20 (MEAQAQGLLETEPLQGTDED) is disordered. Residues 22–73 (VASADFSSMLSEEEKEELKAELVQLEDEITTLRQVLSAKERHLVEIKQKLGM) adopt a coiled-coil conformation. 4 positions are modified to phosphoserine: Ser29, Ser86, Ser122, and Ser131. Arg133 carries the post-translational modification Omega-N-methylarginine. A Phosphothreonine modification is found at Thr146. 2 positions are modified to phosphoserine: Ser149 and Ser174.

It belongs to the TPD52 family. Forms a homodimer or heterodimer with other members of the family.

This Homo sapiens (Human) protein is Tumor protein D53 (TPD52L1).